Consider the following 172-residue polypeptide: Ribosome maturation factor RimM (172 aa).

The region spanning 97–170 (ENEFYFHEII…KITIEVMEGL (74 aa)) is the PRC barrel domain.

This sequence belongs to the RimM family. As to quaternary structure, binds ribosomal protein uS19.

It localises to the cytoplasm. Its function is as follows. An accessory protein needed during the final step in the assembly of 30S ribosomal subunit, possibly for assembly of the head region. Essential for efficient processing of 16S rRNA. May be needed both before and after RbfA during the maturation of 16S rRNA. It has affinity for free ribosomal 30S subunits but not for 70S ribosomes. This is Ribosome maturation factor RimM from Listeria monocytogenes serovar 1/2a (strain ATCC BAA-679 / EGD-e).